The sequence spans 141 residues: S-adenosylmethionine decarboxylase proenzyme (141 aa).

Ser-63 functions as the Schiff-base intermediate with substrate; via pyruvic acid in the catalytic mechanism. The residue at position 63 (Ser-63) is a Pyruvic acid (Ser); by autocatalysis. His-68 acts as the Proton acceptor; for processing activity in catalysis. Catalysis depends on Cys-83, which acts as the Proton donor; for catalytic activity.

It belongs to the prokaryotic AdoMetDC family. Type 1 subfamily. As to quaternary structure, heterotetramer of two alpha and two beta chains arranged as a dimer of alpha/beta heterodimers. It depends on pyruvate as a cofactor. Post-translationally, is synthesized initially as an inactive proenzyme. Formation of the active enzyme involves a self-maturation process in which the active site pyruvoyl group is generated from an internal serine residue via an autocatalytic post-translational modification. Two non-identical subunits are generated from the proenzyme in this reaction, and the pyruvate is formed at the N-terminus of the alpha chain, which is derived from the carboxyl end of the proenzyme. The post-translation cleavage follows an unusual pathway, termed non-hydrolytic serinolysis, in which the side chain hydroxyl group of the serine supplies its oxygen atom to form the C-terminus of the beta chain, while the remainder of the serine residue undergoes an oxidative deamination to produce ammonia and the pyruvoyl group blocking the N-terminus of the alpha chain.

It catalyses the reaction S-adenosyl-L-methionine + H(+) = S-adenosyl 3-(methylsulfanyl)propylamine + CO2. The protein operates within amine and polyamine biosynthesis; S-adenosylmethioninamine biosynthesis; S-adenosylmethioninamine from S-adenosyl-L-methionine: step 1/1. Catalyzes the decarboxylation of S-adenosylmethionine to S-adenosylmethioninamine (dcAdoMet), the propylamine donor required for the synthesis of the polyamines spermine and spermidine from the diamine putrescine. In Thermococcus onnurineus (strain NA1), this protein is S-adenosylmethionine decarboxylase proenzyme.